The chain runs to 484 residues: Transmembrane protein 161B (484 aa).

The chain crosses the membrane as a helical span at residues 108-128; that stretch reads LVDFTVAATVVYLITELYFCV. N-linked (GlcNAc...) asparagine glycosylation is present at N136. 2 helical membrane passes run 137-157 and 170-190; these read ISVV…FSLT and SLCI…LIVT. N204 carries N-linked (GlcNAc...) asparagine glycosylation. The next 4 helical transmembrane spans lie at 229-249, 266-286, 368-388, and 456-476; these read FKLI…FPGL, VTQT…LLWV, VFYY…MLLH, and LSFF…FGLF.

The protein belongs to the TMEM161 family.

The protein localises to the cell membrane. In terms of biological role, essential for maintaining normal cardiac rhythm in the developing heart and for neonatal survival. Inhibits potassium and calcium currents in the cardiomyocytes, this assists in timely action potential repolarization and thereby maintains normal cardiac rhythm. In Danio rerio (Zebrafish), this protein is Transmembrane protein 161B (tmem161b).